A 463-amino-acid chain; its full sequence is Lipase 5 (463 aa).

The N-terminal stretch at 1-14 (MLYLILFLIAPIYA) is a signal peptide. A disulfide bridge connects residues Cys110 and Cys281. Ser194 (charge relay system) is an active-site residue. Asn229 is a glycosylation site (N-linked (GlcNAc...) asparagine). Active-site charge relay system residues include Asp343 and His376. A disulfide bridge links Cys359 with Cys404.

Belongs to the AB hydrolase superfamily. Lipase family. Class Lip subfamily.

The protein resides in the secreted. The catalysed reaction is a triacylglycerol + H2O = a diacylglycerol + a fatty acid + H(+). Fe(2)+, Fe(3+), Hg(2+) as well as ethylenediaminetetraacetic acid (EDTA) and phenylmethanesulfonyl fluoride (PMSF) strongly inhibit the lipase activity. Surfactants such as Tween 20, Tween 80 and TritonX-100 show also inhibitory effect in the lipase activity. Sodium dodecyl sulfate (SDS) sharply decreases the lipase activity by 85%. Methanol, ethanol, and acetone have also negative effect on the lipase activity, with residual activities at 48%, 24% and 44% respectively. Finally, lipase activity is almost lost in the presence of isopropanol alcohol. In terms of biological role, secreted lipase that is able to hydrolyze both the neutral triacylglycerols and the monopalmitate ester Tween 40, allowing the use of hydrolyzed products as carbon sources. Exhibits a preference for the short and medium chain length p-NP (C4 and C8 acyl group) esters rather than the long chain length p-NP esters (C12, C16 and C18 acyl group). Has broad lipolytic activity, which may be important for colonization and subsequent infection, therefore contributing to the persistence and virulence in human tissue. The polypeptide is Lipase 5 (Candida albicans (strain SC5314 / ATCC MYA-2876) (Yeast)).